The primary structure comprises 476 residues: Adenosylhomocysteinase (476 aa).

The substrate site is built by threonine 67, aspartate 142, and glutamate 202. An NAD(+)-binding site is contributed by 203–205 (TTT). Lysine 232 and aspartate 236 together coordinate substrate. NAD(+)-binding positions include asparagine 237, 266–271 (GYGDVG), glutamate 289, asparagine 324, 345–347 (IGH), and asparagine 390.

This sequence belongs to the adenosylhomocysteinase family. Requires NAD(+) as cofactor.

The protein localises to the cytoplasm. The catalysed reaction is S-adenosyl-L-homocysteine + H2O = L-homocysteine + adenosine. Its pathway is amino-acid biosynthesis; L-homocysteine biosynthesis; L-homocysteine from S-adenosyl-L-homocysteine: step 1/1. Its function is as follows. May play a key role in the regulation of the intracellular concentration of adenosylhomocysteine. The chain is Adenosylhomocysteinase from Prochlorococcus marinus (strain SARG / CCMP1375 / SS120).